The following is a 484-amino-acid chain: ATP synthase subunit beta (484 aa).

162–169 (GGAGVGKT) contacts ATP.

It belongs to the ATPase alpha/beta chains family. F-type ATPases have 2 components, CF(1) - the catalytic core - and CF(0) - the membrane proton channel. CF(1) has five subunits: alpha(3), beta(3), gamma(1), delta(1), epsilon(1). CF(0) has four main subunits: a(1), b(1), b'(1) and c(9-12).

Its subcellular location is the cellular thylakoid membrane. It catalyses the reaction ATP + H2O + 4 H(+)(in) = ADP + phosphate + 5 H(+)(out). Its function is as follows. Produces ATP from ADP in the presence of a proton gradient across the membrane. The catalytic sites are hosted primarily by the beta subunits. This is ATP synthase subunit beta from Trichodesmium erythraeum (strain IMS101).